A 256-amino-acid chain; its full sequence is MRLFLALLALGFAAVAAVPANPQRIVGGSTTTIQQYPTIVALLFSRNGNTFFQACGGIILNNRNILTAAHCPHGDAVNRWRVRSGSTFANSGGAVHNLNRVRIHPNYNSRTLDNDIAIMRTSSNIAFNNAAQPARIAGANYNVGDNQVVWAAGWGDIRSGGPPSEQLRHVQVWTVNQATCRSRYASIGRSVTDNMLCSGWLDVGGRDQCQGDSGGPLYHNGVVVGVSSWGEECALARFPGVNARVSRFANWIRNNS.

Residues 1-17 (MRLFLALLALGFAAVAA) form the signal peptide. Positions 18 to 24 (VPANPQR) are cleaved as a propeptide — activation peptide. The Peptidase S1 domain maps to 25–256 (IVGGSTTTIQ…RFANWIRNNS (232 aa)). A disulfide bond links C55 and C71. Catalysis depends on charge relay system residues H70 and D115. 2 disulfide bridges follow: C180–C197 and C209–C233. The active-site Charge relay system is the S213.

Belongs to the peptidase S1 family. Midgut.

Its subcellular location is the secreted. The protein resides in the extracellular space. It carries out the reaction Preferential cleavage: Arg-|-Xaa, Lys-|-Xaa.. This chain is Trypsin, alkaline B, found in Manduca sexta (Tobacco hawkmoth).